The following is a 468-amino-acid chain: Glutamate--tRNA ligase (468 aa).

Residues 8–18 carry the 'HIGH' region motif; sequence PSPTGFLHVGG. Zn(2+)-binding residues include Cys97, Cys99, Cys124, and Asp126. Positions 236–240 match the 'KMSKS' region motif; that stretch reads KLSKR. Residue Lys239 coordinates ATP.

It belongs to the class-I aminoacyl-tRNA synthetase family. Glutamate--tRNA ligase type 1 subfamily. As to quaternary structure, monomer. It depends on Zn(2+) as a cofactor.

The protein resides in the cytoplasm. The enzyme catalyses tRNA(Glu) + L-glutamate + ATP = L-glutamyl-tRNA(Glu) + AMP + diphosphate. Functionally, catalyzes the attachment of glutamate to tRNA(Glu) in a two-step reaction: glutamate is first activated by ATP to form Glu-AMP and then transferred to the acceptor end of tRNA(Glu). The sequence is that of Glutamate--tRNA ligase from Francisella tularensis subsp. tularensis (strain SCHU S4 / Schu 4).